The chain runs to 180 residues: Adenosine 5'-phosphosulfate reductase (180 aa).

Residues C57, C58, C140, and C143 each contribute to the [4Fe-4S] cluster site. C168 acts as the Nucleophile; cysteine thiosulfonate intermediate in catalysis.

Belongs to the PAPS reductase family. CysH subfamily. The cofactor is [4Fe-4S] cluster.

Its subcellular location is the cytoplasm. The enzyme catalyses [thioredoxin]-disulfide + sulfite + AMP + 2 H(+) = adenosine 5'-phosphosulfate + [thioredoxin]-dithiol. It participates in sulfur metabolism; hydrogen sulfide biosynthesis; sulfite from sulfate. Its function is as follows. Catalyzes the formation of sulfite from adenosine 5'-phosphosulfate (APS) using thioredoxin as an electron donor. In Rhizobium tropici, this protein is Adenosine 5'-phosphosulfate reductase.